We begin with the raw amino-acid sequence, 159 residues long: Large ribosomal subunit protein uL23m (159 aa).

Belongs to the universal ribosomal protein uL23 family. In terms of assembly, component of the mitochondrial ribosome large subunit (39S) which comprises a 16S rRNA and about 50 distinct proteins.

It is found in the mitochondrion. The sequence is that of Large ribosomal subunit protein uL23m (mrpl-23) from Caenorhabditis elegans.